The primary structure comprises 100 residues: Small ribosomal subunit protein uS14c (100 aa).

Belongs to the universal ribosomal protein uS14 family. Part of the 30S ribosomal subunit.

Its subcellular location is the plastid. It localises to the chloroplast. Binds 16S rRNA, required for the assembly of 30S particles. This chain is Small ribosomal subunit protein uS14c, found in Draba nemorosa (Woodland whitlowgrass).